We begin with the raw amino-acid sequence, 160 residues long: SsrA-binding protein (160 aa).

It belongs to the SmpB family.

It localises to the cytoplasm. Functionally, required for rescue of stalled ribosomes mediated by trans-translation. Binds to transfer-messenger RNA (tmRNA), required for stable association of tmRNA with ribosomes. tmRNA and SmpB together mimic tRNA shape, replacing the anticodon stem-loop with SmpB. tmRNA is encoded by the ssrA gene; the 2 termini fold to resemble tRNA(Ala) and it encodes a 'tag peptide', a short internal open reading frame. During trans-translation Ala-aminoacylated tmRNA acts like a tRNA, entering the A-site of stalled ribosomes, displacing the stalled mRNA. The ribosome then switches to translate the ORF on the tmRNA; the nascent peptide is terminated with the 'tag peptide' encoded by the tmRNA and targeted for degradation. The ribosome is freed to recommence translation, which seems to be the essential function of trans-translation. This chain is SsrA-binding protein, found in Citrobacter koseri (strain ATCC BAA-895 / CDC 4225-83 / SGSC4696).